Consider the following 230-residue polypeptide: Large ribosomal subunit protein uL1 (230 aa).

The protein belongs to the universal ribosomal protein uL1 family. Part of the 50S ribosomal subunit.

Binds directly to 23S rRNA. The L1 stalk is quite mobile in the ribosome, and is involved in E site tRNA release. In terms of biological role, protein L1 is also a translational repressor protein, it controls the translation of the L11 operon by binding to its mRNA. This Leuconostoc mesenteroides subsp. mesenteroides (strain ATCC 8293 / DSM 20343 / BCRC 11652 / CCM 1803 / JCM 6124 / NCDO 523 / NBRC 100496 / NCIMB 8023 / NCTC 12954 / NRRL B-1118 / 37Y) protein is Large ribosomal subunit protein uL1.